The sequence spans 200 residues: ATP-dependent Clp protease proteolytic subunit (200 aa).

Ser101 (nucleophile) is an active-site residue. The active site involves His126.

Belongs to the peptidase S14 family. Component of the chloroplastic Clp protease core complex.

The protein resides in the plastid. It localises to the chloroplast stroma. It carries out the reaction Hydrolysis of proteins to small peptides in the presence of ATP and magnesium. alpha-casein is the usual test substrate. In the absence of ATP, only oligopeptides shorter than five residues are hydrolyzed (such as succinyl-Leu-Tyr-|-NHMec, and Leu-Tyr-Leu-|-Tyr-Trp, in which cleavage of the -Tyr-|-Leu- and -Tyr-|-Trp bonds also occurs).. Its function is as follows. Cleaves peptides in various proteins in a process that requires ATP hydrolysis. Has a chymotrypsin-like activity. Plays a major role in the degradation of misfolded proteins. This chain is ATP-dependent Clp protease proteolytic subunit, found in Ostreococcus tauri.